Consider the following 559-residue polypeptide: Probable D-2-hydroxyglutarate dehydrogenase, mitochondrial (559 aa).

The transit peptide at 1-80 (MARRAAAGLL…MNFEVQKRSF (80 aa)) directs the protein to the mitochondrion. The 180-residue stretch at 131-310 (YKGSSQLLLL…TKIAILTPAK (180 aa)) folds into the FAD-binding PCMH-type domain.

It belongs to the FAD-binding oxidoreductase/transferase type 4 family. Homodimer. Requires FAD as cofactor.

It localises to the mitochondrion. It catalyses the reaction (R)-2-hydroxyglutarate + A = 2-oxoglutarate + AH2. Catalyzes the oxidation of D-2-hydroxyglutarate to alpha-ketoglutarate. The protein is Probable D-2-hydroxyglutarate dehydrogenase, mitochondrial (D2HGDH) of Oryza sativa subsp. indica (Rice).